The primary structure comprises 671 residues: Probable potassium transport system protein Kup 2 (671 aa).

12 helical membrane passes run 18–38, 60–80, 103–123, 149–169, 173–193, 218–238, 252–272, 292–312, 343–363, 373–393, 402–422, and 424–444; these read GFLI…LYAM, VSLV…LIAL, WLIV…ALTP, VTTL…ASLV, FGPI…INSF, AGFF…ALYS, WPFV…WLLA, MVIY…QALI, LYIP…VLYF, YSLA…YFLI, IAFI…ASLV, and FING…VMFI.

The protein belongs to the HAK/KUP transporter (TC 2.A.72) family.

Its subcellular location is the cell membrane. It catalyses the reaction K(+)(in) + H(+)(in) = K(+)(out) + H(+)(out). Its function is as follows. Transport of potassium into the cell. Likely operates as a K(+):H(+) symporter. In Lactococcus lactis subsp. cremoris (strain SK11), this protein is Probable potassium transport system protein Kup 2.